The primary structure comprises 582 residues: 2-isopropylmalate synthase (582 aa).

The region spanning Pro40 to Asp314 is the Pyruvate carboxyltransferase domain. Mg(2+)-binding residues include Asp49, His253, His255, and Asn289. The tract at residues Ser456 to Asp582 is regulatory domain.

The protein belongs to the alpha-IPM synthase/homocitrate synthase family. LeuA type 2 subfamily. Homodimer. Mg(2+) is required as a cofactor.

It is found in the cytoplasm. The enzyme catalyses 3-methyl-2-oxobutanoate + acetyl-CoA + H2O = (2S)-2-isopropylmalate + CoA + H(+). Its pathway is amino-acid biosynthesis; L-leucine biosynthesis; L-leucine from 3-methyl-2-oxobutanoate: step 1/4. In terms of biological role, catalyzes the condensation of the acetyl group of acetyl-CoA with 3-methyl-2-oxobutanoate (2-ketoisovalerate) to form 3-carboxy-3-hydroxy-4-methylpentanoate (2-isopropylmalate). The polypeptide is 2-isopropylmalate synthase (Renibacterium salmoninarum (strain ATCC 33209 / DSM 20767 / JCM 11484 / NBRC 15589 / NCIMB 2235)).